Here is an 847-residue protein sequence, read N- to C-terminus: Protein SEY1 (847 aa).

Over 1 to 720 (MSSGEPLSET…KRSIVQHVTQ (720 aa)) the chain is Cytoplasmic. The 236-residue stretch at 55–290 (GHNYHIVAVF…VENDIFKPEY (236 aa)) folds into the GB1/RHD3-type G domain. 65 to 72 (GSQSTGKS) lines the GTP pocket. The chain crosses the membrane as a helical span at residues 721 to 741 (IPYYIYIIILLLGWNEFMAVV). The Lumenal segment spans residues 742–744 (RNP). The helical transmembrane segment at 745–765 (FTFSLAIILGASLYILYTMNL) threads the bilayer. Topologically, residues 766 to 847 (LKPALTVTQR…VTSLNVVEEE (82 aa)) are cytoplasmic.

The protein belongs to the TRAFAC class dynamin-like GTPase superfamily. GB1/RHD3 GTPase family. RHD3 subfamily.

The protein resides in the endoplasmic reticulum membrane. Cooperates with the reticulon proteins and tubule-shaping DP1 family proteins to generate and maintain the structure of the tubular endoplasmic reticulum network. Has GTPase activity, which is required for its function in ER organization. In Lodderomyces elongisporus (strain ATCC 11503 / CBS 2605 / JCM 1781 / NBRC 1676 / NRRL YB-4239) (Yeast), this protein is Protein SEY1.